We begin with the raw amino-acid sequence, 298 residues long: Transcription factor SRM1 (298 aa).

The region spanning 7-62 is the SANT domain; sequence SDGSVWSREDDIAFERALANNTDESEERWEKIAADVPGKSVEQIKEHYELLVEDVT. Positions 68-118 are disordered; the sequence is CVPLPAYGSPEGSNGHAGDEGASSKKGGNSHAGESNQAGKSKSDQERRKGI. Residues 108–118 show a composition bias toward basic and acidic residues; sequence SKSDQERRKGI. Positions 111–168 constitute an HTH myb-type domain; sequence DQERRKGIAWTEDEHRLFLLGLDKYGKGDWRSISRNFVVTRTPTQVASHAQKYFIRLN. Positions 140–164 form a DNA-binding region, H-T-H motif; the sequence is WRSISRNFVVTRTPTQVASHAQKYF. The segment covering 182-200 has biased composition (polar residues); the sequence is ITSVGNADVSTPQGPITGQ. The segment at 182 to 245 is disordered; it reads ITSVGNADVS…GPPMYGTPAI (64 aa). The segment covering 201–215 has biased composition (low complexity); sequence NNSNNNNNNNNNNSS.

In terms of tissue distribution, expressed in young seedlings, developing leaves, sepals and trichomes.

It localises to the nucleus. Functionally, transcription activator that coordinates abscisic acid (ABA) biosynthesis and signaling-related genes via binding to the specific promoter motif 5'-(A/T)AACCAT-3'. Represses ABA-mediated salt (e.g. NaCl and KCl) stress tolerance. Regulates leaf shape and promotes vegetative growth. In Arabidopsis thaliana (Mouse-ear cress), this protein is Transcription factor SRM1.